Consider the following 183-residue polypeptide: dCTP deaminase (183 aa).

DCTP is bound at residue 106-111; it reads KSTYAR. Catalysis depends on Glu-132, which acts as the Proton donor/acceptor. Residues Gln-151, Tyr-165, and Gln-175 each coordinate dCTP.

It belongs to the dCTP deaminase family. Homotrimer.

The enzyme catalyses dCTP + H2O + H(+) = dUTP + NH4(+). It participates in pyrimidine metabolism; dUMP biosynthesis; dUMP from dCTP (dUTP route): step 1/2. Catalyzes the deamination of dCTP to dUTP. The protein is dCTP deaminase of Gluconobacter oxydans (strain 621H) (Gluconobacter suboxydans).